The sequence spans 2512 residues: Fatty acid synthase (2512 aa).

An N-acetylglutamate modification is found at Glu-2. The 405-residue stretch at 2–406 folds into the Ketosynthase family 3 (KS3) domain; it reads EDVVIAGIAG…GSNAHVILRP (405 aa). Catalysis depends on for beta-ketoacyl synthase activity residues Cys-161, His-293, and His-331. The acyl and malonyl transferases stretch occupies residues 427–815; sequence GRTQEAVEIL…GINVLGNNLF (389 aa). Catalysis depends on Ser-580, which acts as the For acyl/malonyl transferase activity. An acyl-CoA-binding positions include 646–647, Phe-670, and Arg-772; that span reads DT. Residues 844-967 are N-terminal hotdog fold; it reads PKAEDFPSGS…ISLLENDALK (124 aa). In terms of domain architecture, PKS/mFAS DH spans 844 to 1111; the sequence is PKAEDFPSGS…ASVAPRRQQE (268 aa). His-878 (proton acceptor; for dehydratase activity) is an active-site residue. Positions 984–1111 are C-terminal hotdog fold; sequence AKSGLLMEDV…ASVAPRRQQE (128 aa). The active-site Proton donor; for dehydratase activity is the Asp-1034. The residue at position 1475 (Cys-1475) is an S-nitrosocysteine. The tract at residues 1638-1866 is enoyl reductase; the sequence is WEVPENWTLE…MIKIQEEEKQ (229 aa). 1675–1692 is a binding site for NADP(+); that stretch reads VLIHSGSGGVGQAAIAIA. At Lys-1708 the chain carries N6-(pyridoxal phosphate)lysine. A beta-ketoacyl reductase region spans residues 1867–2119; the sequence is YPLRSEPVKL…SFVLAEKVSV (253 aa). Residue 1889 to 1904 coordinates NADP(+); the sequence is SYIITGGLGGFGLELA. Cys-2093 bears the S-nitrosocysteine mark. The region spanning 2120-2200 is the Carrier domain; it reads KSEGGSQRDL…ELSSKTGTAE (81 aa). Position 2158 is an O-(pantetheine 4'-phosphoryl)serine (Ser-2158). A thioesterase region spans residues 2209–2511; the sequence is KTGPGEPPKL…LAEPRVSVRE (303 aa). Catalysis depends on for thioesterase activity residues Ser-2309 and His-2482.

As to quaternary structure, homodimer which is arranged in a head to tail fashion. Post-translationally, S-nitrosylation of Fatty acid synthase at cysteine residues Cys-1475 or Cys-2093 is important for the enzyme dimerization. In adipocytes, S-nitrosylation of Fatty acid synthase occurs under physiological conditions and gradually increases during adipogenesis.

The catalysed reaction is acetyl-CoA + n malonyl-CoA + 2n NADPH + 2n H(+) = a long-chain fatty acid + (n+1) CoA + n CO2 + 2n NADP(+).. It catalyses the reaction holo-[ACP] + acetyl-CoA = acetyl-[ACP] + CoA. It carries out the reaction holo-[ACP] + malonyl-CoA = malonyl-[ACP] + CoA. The enzyme catalyses a fatty acyl-[ACP] + malonyl-[ACP] + H(+) = a 3-oxoacyl-[ACP] + holo-[ACP] + CO2. The catalysed reaction is a (3R)-hydroxyacyl-[ACP] + NADP(+) = a 3-oxoacyl-[ACP] + NADPH + H(+). It catalyses the reaction a (3R)-hydroxyacyl-[ACP] = a (2E)-enoyl-[ACP] + H2O. It carries out the reaction a 2,3-saturated acyl-[ACP] + NADP(+) = a (2E)-enoyl-[ACP] + NADPH + H(+). The enzyme catalyses hexadecanoyl-[ACP] + H2O = hexadecanoate + holo-[ACP] + H(+). The catalysed reaction is acetyl-[ACP] + malonyl-[ACP] + H(+) = 3-oxobutanoyl-[ACP] + holo-[ACP] + CO2. It catalyses the reaction 3-oxobutanoyl-[ACP] + NADPH + H(+) = (3R)-hydroxybutanoyl-[ACP] + NADP(+). It carries out the reaction (3R)-hydroxybutanoyl-[ACP] = (2E)-butenoyl-[ACP] + H2O. The enzyme catalyses (2E)-butenoyl-[ACP] + NADPH + H(+) = butanoyl-[ACP] + NADP(+). The catalysed reaction is butanoyl-[ACP] + malonyl-[ACP] + H(+) = 3-oxohexanoyl-[ACP] + holo-[ACP] + CO2. It catalyses the reaction 3-oxohexanoyl-[ACP] + NADPH + H(+) = (3R)-hydroxyhexanoyl-[ACP] + NADP(+). It carries out the reaction (3R)-hydroxyhexanoyl-[ACP] = (2E)-hexenoyl-[ACP] + H2O. The enzyme catalyses (2E)-hexenoyl-[ACP] + NADPH + H(+) = hexanoyl-[ACP] + NADP(+). The catalysed reaction is hexanoyl-[ACP] + malonyl-[ACP] + H(+) = 3-oxooctanoyl-[ACP] + holo-[ACP] + CO2. It catalyses the reaction 3-oxooctanoyl-[ACP] + NADPH + H(+) = (3R)-hydroxyoctanoyl-[ACP] + NADP(+). It carries out the reaction (3R)-hydroxyoctanoyl-[ACP] = (2E)-octenoyl-[ACP] + H2O. The enzyme catalyses (2E)-octenoyl-[ACP] + NADPH + H(+) = octanoyl-[ACP] + NADP(+). The catalysed reaction is octanoyl-[ACP] + malonyl-[ACP] + H(+) = 3-oxodecanoyl-[ACP] + holo-[ACP] + CO2. It catalyses the reaction 3-oxodecanoyl-[ACP] + NADPH + H(+) = (3R)-hydroxydecanoyl-[ACP] + NADP(+). It carries out the reaction (3R)-hydroxydecanoyl-[ACP] = (2E)-decenoyl-[ACP] + H2O. The enzyme catalyses (2E)-decenoyl-[ACP] + NADPH + H(+) = decanoyl-[ACP] + NADP(+). The catalysed reaction is decanoyl-[ACP] + malonyl-[ACP] + H(+) = 3-oxododecanoyl-[ACP] + holo-[ACP] + CO2. It catalyses the reaction 3-oxododecanoyl-[ACP] + NADPH + H(+) = (3R)-hydroxydodecanoyl-[ACP] + NADP(+). It carries out the reaction (3R)-hydroxydodecanoyl-[ACP] = (2E)-dodecenoyl-[ACP] + H2O. The enzyme catalyses (2E)-dodecenoyl-[ACP] + NADPH + H(+) = dodecanoyl-[ACP] + NADP(+). The catalysed reaction is dodecanoyl-[ACP] + malonyl-[ACP] + H(+) = 3-oxotetradecanoyl-[ACP] + holo-[ACP] + CO2. It catalyses the reaction 3-oxotetradecanoyl-[ACP] + NADPH + H(+) = (3R)-hydroxytetradecanoyl-[ACP] + NADP(+). It carries out the reaction (3R)-hydroxytetradecanoyl-[ACP] = (2E)-tetradecenoyl-[ACP] + H2O. The enzyme catalyses (2E)-tetradecenoyl-[ACP] + NADPH + H(+) = tetradecanoyl-[ACP] + NADP(+). The catalysed reaction is tetradecanoyl-[ACP] + malonyl-[ACP] + H(+) = 3-oxohexadecanoyl-[ACP] + holo-[ACP] + CO2. It catalyses the reaction 3-oxohexadecanoyl-[ACP] + NADPH + H(+) = (3R)-hydroxyhexadecanoyl-[ACP] + NADP(+). It carries out the reaction (3R)-hydroxyhexadecanoyl-[ACP] = (2E)-hexadecenoyl-[ACP] + H2O. The enzyme catalyses (2E)-hexadecenoyl-[ACP] + NADPH + H(+) = hexadecanoyl-[ACP] + NADP(+). The catalysed reaction is hexadecanoyl-[ACP] + malonyl-[ACP] + H(+) = 3-oxooctadecanoyl-[ACP] + holo-[ACP] + CO2. It catalyses the reaction 3-oxooctadecanoyl-[ACP] + NADPH + H(+) = (3R)-hydroxyoctadecanoyl-[ACP] + NADP(+). It carries out the reaction (3R)-hydroxyoctadecanoyl-[ACP] = (2E)-octadecenoyl-[ACP] + H2O. The enzyme catalyses (2E)-octadecenoyl-[ACP] + NADPH + H(+) = octadecanoyl-[ACP] + NADP(+). The catalysed reaction is tetradecanoyl-[ACP] + H2O = tetradecanoate + holo-[ACP] + H(+). It catalyses the reaction octadecanoyl-[ACP] + H2O = octadecanoate + holo-[ACP] + H(+). The protein operates within lipid metabolism; fatty acid biosynthesis. Its activity is regulated as follows. Cerulenin, a potent non-competitive pharmacological inhibitor of FAS, binds covalently to the active site of the condensing enzyme region, inactivating a key enzyme step in fatty acid synthesis. Functionally, fatty acid synthetase is a multifunctional enzyme that catalyzes the de novo biosynthesis of long-chain saturated fatty acids starting from acetyl-CoA and malonyl-CoA in the presence of NADPH. This multifunctional protein contains 7 catalytic activities and a site for the binding of the prosthetic group 4'-phosphopantetheine of the acyl carrier protein ([ACP]) domain. The sequence is that of Fatty acid synthase (FASN) from Gallus gallus (Chicken).